A 370-amino-acid chain; its full sequence is Proto-oncogene Wnt-1 (370 aa).

The N-terminal stretch at Met1–Ala27 is a signal peptide. Asn29 is a glycosylation site (N-linked (GlcNAc...) asparagine). Cystine bridges form between Cys93–Cys104, Cys143–Cys151, Cys153–Cys170, Cys218–Cys232, Cys220–Cys227, Cys299–Cys330, Cys315–Cys325, Cys329–Cys369, Cys345–Cys360, Cys347–Cys357, and Cys352–Cys353. Ser224 carries the O-palmitoleoyl serine; by PORCN lipid modification. Asn316 and Asn346 each carry an N-linked (GlcNAc...) asparagine glycan. Residue Asn359 is glycosylated (N-linked (GlcNAc...) asparagine).

Belongs to the Wnt family. Forms a soluble 1:1 complex with AFM; this prevents oligomerization and is required for prolonged biological activity. The complex with AFM may represent the physiological form in body fluids. Interacts with PORCN. Interacts with RSPO1, RSPO2 and RSPO3. Interacts with WLS. In terms of processing, palmitoleoylation is required for efficient binding to frizzled receptors. Palmitoleoylation is necessary for proper trafficking to cell surface. Depalmitoleoylated by NOTUM, leading to inhibit Wnt signaling pathway. In terms of tissue distribution, testis and mid-gestational embryos. In the testis, detected only in postmeiotic germ cells undergoing differentiation from round spermatids into mature spermatozoa. In the embryos, expression is restricted to the developing CNS in regions of the neural tube other than the telencephalon. Expressed in osteoblast; expression levels increase with advancing osteoblast differentiation. Expressed in the brain, femur, spleen, and hematopoietic bone marrow.

It is found in the secreted. The protein localises to the extracellular space. The protein resides in the extracellular matrix. Functionally, ligand for members of the frizzled family of seven transmembrane receptors. Acts in the canonical Wnt signaling pathway by promoting beta-catenin-dependent transcriptional activation. In some developmental processes, is also a ligand for the coreceptor RYK, thus triggering Wnt signaling. Plays an essential role in the development of the embryonic brain and central nervous system (CNS). Has a role in osteoblast function, bone development and bone homeostasis. The sequence is that of Proto-oncogene Wnt-1 (Wnt1) from Mus musculus (Mouse).